A 1460-amino-acid polypeptide reads, in one-letter code: DNA-binding protein RFX7 (1460 aa).

A disordered region spans residues Met-1–Val-34. Positions Ala-108–Ala-183 form a DNA-binding region, RFX-type winged-helix. Residues Pro-188–Leu-193 carry the PxLPxI/L motif; mediates interaction with ANKRA2 and RFXANK motif. A disordered region spans residues Gln-308 to Leu-352. Ser-322 bears the Phosphoserine mark. Residues Thr-337–Leu-352 show a composition bias toward polar residues. Ser-379 carries the post-translational modification Phosphoserine. Polar residues predominate over residues Ser-404–Pro-416. A disordered region spans residues Ser-404–Arg-428. Ser-418 and Ser-455 each carry phosphoserine. Residues Thr-481–Asn-513 show a composition bias toward polar residues. Disordered regions lie at residues Thr-481–Glu-585, Thr-632–Pro-715, and Gln-917–Pro-1015. Residues Ser-515–Val-535 show a composition bias toward low complexity. Residues Val-537–Pro-549 are compositionally biased toward basic and acidic residues. Composition is skewed to polar residues over residues Gln-563–Ser-583 and Thr-632–Ser-644. Position 564 is a phosphothreonine (Thr-564). Ser-662 is subject to Phosphoserine. At Lys-704 the chain carries N6-acetyllysine. Polar residues-rich tracts occupy residues Thr-705–Pro-715 and Gln-917–His-933. Residues Thr-947–Thr-963 show a composition bias toward pro residues. A compositionally biased stretch (polar residues) spans Gly-971–Cys-1009. Thr-988 carries the post-translational modification Phosphothreonine. Residues Ser-1178 and Ser-1329 each carry the phosphoserine modification.

This sequence belongs to the RFX family. Interacts (via PxLPxI/L motif) with RFXANK (via ankyrin repeats). Interacts (via PxLPxI/L motif) with ANKRA2 (via ankyrin repeats). In terms of tissue distribution, widely expressed in many different tissue types including thymus and placenta, with high expression in brain. Expressed in both inhibitory and excitatory neurons in cortex.

Its subcellular location is the nucleus. Functionally, transcription factor. Acts as a transcriptional activator by binding to promoter regions of target genes, such as PDCD4, PIK3IP1, MXD4, PNRC1, and RFX5. Plays a role in natural killer (NK) cell maintenance and immunity. May play a role in the process of ciliogenesis in the neural tube and neural tube closure. The polypeptide is DNA-binding protein RFX7 (Homo sapiens (Human)).